The sequence spans 327 residues: GMP reductase (327 aa).

The active-site Thioimidate intermediate is the C176. 205–228 (IIADGGIRTHGDIAKSIRFGASMV) contributes to the NADP(+) binding site.

It belongs to the IMPDH/GMPR family. GuaC type 2 subfamily.

The enzyme catalyses IMP + NH4(+) + NADP(+) = GMP + NADPH + 2 H(+). Catalyzes the irreversible NADPH-dependent deamination of GMP to IMP. It functions in the conversion of nucleobase, nucleoside and nucleotide derivatives of G to A nucleotides, and in maintaining the intracellular balance of A and G nucleotides. This chain is GMP reductase, found in Streptococcus pyogenes serotype M28 (strain MGAS6180).